A 278-amino-acid chain; its full sequence is Tryptophan synthase alpha chain (278 aa).

Active-site proton acceptor residues include Glu-50 and Asp-61.

Belongs to the TrpA family. Tetramer of two alpha and two beta chains.

It catalyses the reaction (1S,2R)-1-C-(indol-3-yl)glycerol 3-phosphate + L-serine = D-glyceraldehyde 3-phosphate + L-tryptophan + H2O. It participates in amino-acid biosynthesis; L-tryptophan biosynthesis; L-tryptophan from chorismate: step 5/5. In terms of biological role, the alpha subunit is responsible for the aldol cleavage of indoleglycerol phosphate to indole and glyceraldehyde 3-phosphate. This is Tryptophan synthase alpha chain from Methylorubrum populi (strain ATCC BAA-705 / NCIMB 13946 / BJ001) (Methylobacterium populi).